A 285-amino-acid polypeptide reads, in one-letter code: Autophagy-related protein 27 (285 aa).

The N-terminal stretch at 1–18 is a signal peptide; it reads MKVLLATALVSLLPFSSA. In terms of domain architecture, MRH spans 19-167; sequence VECSKNEILN…VFSGPFGCLK (149 aa). The Lumenal segment spans residues 19–209; sequence VECSKNEILN…GSKPKGGAGL (191 aa). Disulfide bonds link Cys-21-Cys-59, Cys-72-Cys-79, and Cys-136-Cys-165. A disordered region spans residues 168–204; that stretch reads KGNDNKDGNGDDDNNDKDGDDSDKKPHDGDKNGSKPK. Acidic residues predominate over residues 177-188; the sequence is GDDDNNDKDGDD. The segment covering 189–200 has biased composition (basic and acidic residues); that stretch reads SDKKPHDGDKNG. The N-linked (GlcNAc...) asparagine glycan is linked to Asn-199. Residues 210–230 traverse the membrane as a helical segment; it reads GSWLVWLFMYATIFALIYLVV. Residues 231 to 285 lie on the Cytoplasmic side of the membrane; that stretch reads TSYMNTRNGSFNDFREEFVDRSTTFATNLPQFAKEVAGKIVNSGSSSQRGGYSAV.

The protein belongs to the ATG27 family.

The protein localises to the cytoplasmic vesicle membrane. It localises to the golgi apparatus membrane. It is found in the mitochondrion membrane. Its subcellular location is the preautophagosomal structure membrane. Effector of VPS34 phosphatidylinositol 3-phosphate kinase signaling. Regulates the cytoplasm to vacuole transport (Cvt) vesicle formation. Plays a role in ATG protein retrieval from the pre-autophagosomal structure (PAS) and is especially required for autophagy-dependent cycling of ATG9. The sequence is that of Autophagy-related protein 27 (ATG27) from Kluyveromyces lactis (strain ATCC 8585 / CBS 2359 / DSM 70799 / NBRC 1267 / NRRL Y-1140 / WM37) (Yeast).